We begin with the raw amino-acid sequence, 109 residues long: Large ribosomal subunit protein uL22 (109 aa).

Belongs to the universal ribosomal protein uL22 family. As to quaternary structure, part of the 50S ribosomal subunit.

This protein binds specifically to 23S rRNA; its binding is stimulated by other ribosomal proteins, e.g. L4, L17, and L20. It is important during the early stages of 50S assembly. It makes multiple contacts with different domains of the 23S rRNA in the assembled 50S subunit and ribosome. Functionally, the globular domain of the protein is located near the polypeptide exit tunnel on the outside of the subunit, while an extended beta-hairpin is found that lines the wall of the exit tunnel in the center of the 70S ribosome. In Ralstonia pickettii (strain 12J), this protein is Large ribosomal subunit protein uL22.